The sequence spans 154 residues: 3-hydroxyacyl-[acyl-carrier-protein] dehydratase FabZ (154 aa).

Residue H54 is part of the active site.

It belongs to the thioester dehydratase family. FabZ subfamily.

Its subcellular location is the cytoplasm. The catalysed reaction is a (3R)-hydroxyacyl-[ACP] = a (2E)-enoyl-[ACP] + H2O. Its function is as follows. Involved in unsaturated fatty acids biosynthesis. Catalyzes the dehydration of short chain beta-hydroxyacyl-ACPs and long chain saturated and unsaturated beta-hydroxyacyl-ACPs. This is 3-hydroxyacyl-[acyl-carrier-protein] dehydratase FabZ from Chlamydia caviae (strain ATCC VR-813 / DSM 19441 / 03DC25 / GPIC) (Chlamydophila caviae).